Here is a 116-residue protein sequence, read N- to C-terminus: Somatostatin (116 aa).

The first 24 residues, 1–24 (MLSCRLQCALAALSIVLALGGVTC), serve as a signal peptide directing secretion. A propeptide spanning residues 25–88 (APSDPRLRQF…QDEMRLELQR (64 aa)) is cleaved from the precursor. Ala43 bears the Alanine amide mark. The interval 62–99 (QTENDALEPEDLSQAAEQDEMRLELQRSANSNPAMAPR) is disordered. Cys105 and Cys116 form a disulfide bridge.

The protein belongs to the somatostatin family. C-terminal amidation of the neuronostatin peptide is required for its biological activity, including for the regulation of mean arterial pressure.

The protein localises to the secreted. Inhibits the secretion of pituitary hormones, including that of growth hormone/somatotropin (GH1), PRL, ACTH, luteinizing hormone (LH) and TSH. Also impairs ghrelin- and GnRH-stimulated secretion of GH1 and LH; the inhibition of ghrelin-stimulated secretion of GH1 can be further increased by neuronostatin. Functionally, may enhance low-glucose-induced glucagon release by pancreatic alpha cells. This effect may be mediated by binding to GPR107 and PKA activation. May regulate cardiac contractile function. May compromise cardiomyocyte viability. In the central nervous system, may impair memory retention and may affect hippocampal excitability. May also have anxiolytic and anorexigenic effects. May play a role in arterial pressure regulation. May inhibit basal, but not ghrelin- or GnRH-stimulated secretion of GH1 or LH, but does not affect the release of other pituitary hormones, including PRL, ACTH, FSH or TSH. Potentiates inhibitory action of somatostatin on ghrelin-stimulated secretion of GH1, but not that on GnRH-stimulated secretion of LH. The protein is Somatostatin (SST) of Canis lupus familiaris (Dog).